Here is a 440-residue protein sequence, read N- to C-terminus: tRNA modification GTPase MnmE (440 aa).

(6S)-5-formyl-5,6,7,8-tetrahydrofolate is bound by residues R23, E80, and K120. One can recognise a TrmE-type G domain in the interval 217–366 (GLKIVIAGEP…LLAMLQAHLP (150 aa)). N227 provides a ligand contact to K(+). GTP is bound by residues 227-232 (NAGKSS), 246-252 (TEIAGTT), and 271-274 (DTAG). A Mg(2+)-binding site is contributed by S231. Residues T246, I248, and T251 each contribute to the K(+) site. Residue T252 participates in Mg(2+) binding. Residue K440 participates in (6S)-5-formyl-5,6,7,8-tetrahydrofolate binding.

It belongs to the TRAFAC class TrmE-Era-EngA-EngB-Septin-like GTPase superfamily. TrmE GTPase family. In terms of assembly, homodimer. Heterotetramer of two MnmE and two MnmG subunits. Requires K(+) as cofactor.

It is found in the cytoplasm. Functionally, exhibits a very high intrinsic GTPase hydrolysis rate. Involved in the addition of a carboxymethylaminomethyl (cmnm) group at the wobble position (U34) of certain tRNAs, forming tRNA-cmnm(5)s(2)U34. The chain is tRNA modification GTPase MnmE from Sinorhizobium medicae (strain WSM419) (Ensifer medicae).